We begin with the raw amino-acid sequence, 648 residues long: Serine/threonine-protein kinase DCLK3 (648 aa).

2 disordered regions span residues 86-127 (DDRA…HLGV) and 150-345 (QSLE…PRPM). Basic and acidic residues-rich tracts occupy residues 98-127 (GKWEPEPSSKPPREATLEERHARGEKHLGV), 213-234 (ELRRPSKSMDKKEDRGPEDQES), 255-266 (EGLREVKKDTRP), 277-303 (LREHQAGFEKLRRTRGEEKEAEKEKKP), and 312-338 (TLRDDQPAKLEKEPKTRPEENKPERPS). The Protein kinase domain occupies 356–613 (YETGRVIGDG…AHQVLQHPWI (258 aa)). ATP-binding positions include 362–370 (IGDGNFAVV) and Lys385. The active-site Proton acceptor is the Asp477. Residues 628–648 (VSPSSEGHFRSQHKRVVEQVS) are disordered.

This sequence belongs to the protein kinase superfamily. CAMK Ser/Thr protein kinase family. CaMK subfamily.

Its subcellular location is the cytoplasm. The protein localises to the nucleus. The catalysed reaction is L-seryl-[protein] + ATP = O-phospho-L-seryl-[protein] + ADP + H(+). It carries out the reaction L-threonyl-[protein] + ATP = O-phospho-L-threonyl-[protein] + ADP + H(+). This chain is Serine/threonine-protein kinase DCLK3 (DCLK3), found in Homo sapiens (Human).